Reading from the N-terminus, the 235-residue chain is Hydroxyacylglutathione hydrolase (235 aa).

Zn(2+) contacts are provided by His53, His55, Asp57, His58, His109, Asp127, and His165.

Belongs to the metallo-beta-lactamase superfamily. Glyoxalase II family. In terms of assembly, monomer. Zn(2+) serves as cofactor.

The enzyme catalyses an S-(2-hydroxyacyl)glutathione + H2O = a 2-hydroxy carboxylate + glutathione + H(+). Its pathway is secondary metabolite metabolism; methylglyoxal degradation; (R)-lactate from methylglyoxal: step 2/2. Thiolesterase that catalyzes the hydrolysis of S-D-lactoyl-glutathione to form glutathione and D-lactic acid. The sequence is that of Hydroxyacylglutathione hydrolase from Glaesserella parasuis serovar 5 (strain SH0165) (Haemophilus parasuis).